The sequence spans 537 residues: Cytochrome P450 monooxygenase AOL_s00215g282 (537 aa).

Residues 9-29 form a helical membrane-spanning segment; it reads ATVVLCGSIVTVSIAYVIFVV. N-linked (GlcNAc...) asparagine glycosylation is present at asparagine 126. Cysteine 451 contacts heme.

This sequence belongs to the cytochrome P450 family. Requires heme as cofactor.

It is found in the membrane. The protein operates within secondary metabolite biosynthesis; terpenoid biosynthesis. Its function is as follows. Cytochrome P450 monooxygenase; part of the gene cluster that mediates the biosynthesis of sesquiterpenyl epoxy-cyclohexenoids (SECs) such as anthrobotrisins and arthrosporols, metabolites that possess a novel hybrid carbon skeleton consisting of a polyketide-derived epoxycyclohexenol combined with a terpenoid-derived monocyclic sesquiterpenol substructure (PKS-PTS hybrid). The SEC pathway plays an important role for fungal soil colonization via decreasing fungal nematode-capturing ability. Within the pathway, the cytochrome P450 monooxygenase AOL_s00215g282 acts as a m-cresol hydrolase that converts m-cresol to toluquinol. The pathway begins with the biosynthesis of 6-methylsalicylic acid (6-MSA), the first precursor of the polyketide-derived epoxycyclohexenol in arthrosporols, by the polyketide synthase (PKS) AOL_s00215g283 via condensation of 1 acetate and 3 malonate units. The 6-methylsalicylic acid decarboxylase AOL_s00215g281 then catalyzes the decarboxylation of 6-methylsalicylic acid to yield m-cresol. The cytochrome P450 monooxygenase AOL_s00215g282 further oxidizes m-cresol to yield toluquinol. With the assistance of the oxidoreductase AOL_s00215g277, the polyprenyl transferase AOL_s00215g276 catalyzes the farnesylation of toluquinol to produce farnesyl hydroquinone, the hybrid precursor for biosynthesis of SECs. Farnesyl hydroquinone undergoes epoxidation and then subsequent dehydrogenation to form farnesyl epoxy-quinone, the first and simplest SEC. The cytochrome P450 monooxygenase AOL_s00215g278 and the FAD-dependent monooxygenase AOL_s00215g279 might be involved in the oxygenation of the phenol moiety, most likely in the epoxy formation. The cytochrome P450 monooxygenases AOL_s00215g274 and AOL_s00215g280 are involved in specific regional ketone reductions at respectively C-4 and C-1 of farnesyl epoxy-quinone PubMed:33823587. The protein is Cytochrome P450 monooxygenase AOL_s00215g282 of Arthrobotrys oligospora (strain ATCC 24927 / CBS 115.81 / DSM 1491) (Nematode-trapping fungus).